Here is a 597-residue protein sequence, read N- to C-terminus: Centrosomal protein of 70 kDa (597 aa).

The disordered stretch occupies residues 1–24; that stretch reads MFPVAPKPQDSNQPSDRLMTEKQQ. Coiled coils occupy residues 66–179 and 254–320; these read MRQN…QTEV and TYKG…QELI. Residues 483–516 form a TPR repeat; the sequence is NGVYPRMNEVYTRLGEMNNAVRNLQELLELDSSS.

As to quaternary structure, directly interacts with tubulin-gamma; this interaction determines centrosomal localization.

Its subcellular location is the cytoplasm. It is found in the cytoskeleton. The protein localises to the microtubule organizing center. The protein resides in the centrosome. Its function is as follows. Plays a role in the organization of both preexisting and nascent microtubules in interphase cells. During mitosis, required for the organization and orientation of the mitotic spindle. The sequence is that of Centrosomal protein of 70 kDa (CEP70) from Macaca fascicularis (Crab-eating macaque).